The sequence spans 189 residues: ATP synthase subunit delta (189 aa).

Belongs to the ATPase delta chain family. In terms of assembly, F-type ATPases have 2 components, F(1) - the catalytic core - and F(0) - the membrane proton channel. F(1) has five subunits: alpha(3), beta(3), gamma(1), delta(1), epsilon(1). F(0) has three main subunits: a(1), b(2) and c(10-14). The alpha and beta chains form an alternating ring which encloses part of the gamma chain. F(1) is attached to F(0) by a central stalk formed by the gamma and epsilon chains, while a peripheral stalk is formed by the delta and b chains.

Its subcellular location is the cell inner membrane. In terms of biological role, f(1)F(0) ATP synthase produces ATP from ADP in the presence of a proton or sodium gradient. F-type ATPases consist of two structural domains, F(1) containing the extramembraneous catalytic core and F(0) containing the membrane proton channel, linked together by a central stalk and a peripheral stalk. During catalysis, ATP synthesis in the catalytic domain of F(1) is coupled via a rotary mechanism of the central stalk subunits to proton translocation. Functionally, this protein is part of the stalk that links CF(0) to CF(1). It either transmits conformational changes from CF(0) to CF(1) or is implicated in proton conduction. This Rickettsia bellii (strain OSU 85-389) protein is ATP synthase subunit delta.